The primary structure comprises 103 residues: Small ribosomal subunit protein uS10 (103 aa).

It belongs to the universal ribosomal protein uS10 family. Part of the 30S ribosomal subunit.

Its function is as follows. Involved in the binding of tRNA to the ribosomes. This is Small ribosomal subunit protein uS10 from Aromatoleum aromaticum (strain DSM 19018 / LMG 30748 / EbN1) (Azoarcus sp. (strain EbN1)).